A 260-amino-acid chain; its full sequence is DNA repair protein RecO (260 aa).

The protein belongs to the RecO family.

Involved in DNA repair and RecF pathway recombination. This chain is DNA repair protein RecO, found in Streptococcus gordonii (strain Challis / ATCC 35105 / BCRC 15272 / CH1 / DL1 / V288).